We begin with the raw amino-acid sequence, 359 residues long: Peptide chain release factor 1 (359 aa).

Glutamine 236 is subject to N5-methylglutamine.

The protein belongs to the prokaryotic/mitochondrial release factor family. Post-translationally, methylated by PrmC. Methylation increases the termination efficiency of RF1.

It localises to the cytoplasm. Its function is as follows. Peptide chain release factor 1 directs the termination of translation in response to the peptide chain termination codons UAG and UAA. The protein is Peptide chain release factor 1 of Streptococcus mutans serotype c (strain ATCC 700610 / UA159).